A 195-amino-acid polypeptide reads, in one-letter code: CASP-like protein 1E2 (195 aa).

Over 1–29 (MEVESKTSFGGMESKSKEVKVVTGGKLRP) the chain is Cytoplasmic. The chain crosses the membrane as a helical span at residues 30-50 (FDLVLRVVALALTLVAAVLLG). Topologically, residues 51–82 (VDKQTKVVSLQLLPTLPPMDVPVTAKWRYLSA) are extracellular. Residues 83–103 (FVYFVVSNAIACSYAALSLLL) traverse the membrane as a helical segment. The Cytoplasmic segment spans residues 104 to 122 (SVGNSKGNKGLGLAITVMD). Residues 123-143 (LVMVALLFSSNGAAGAIGLMG) form a helical membrane-spanning segment. At 144 to 165 (YEGNSRVRWGKVCNVFGKFCNQ) the chain is on the extracellular side. Residues 166–186 (VAVALGLSFFGGLAFFLLVVM) form a helical membrane-spanning segment. At 187–195 (AAFALNKRH) the chain is on the cytoplasmic side.

The protein belongs to the Casparian strip membrane proteins (CASP) family. As to quaternary structure, homodimer and heterodimers.

The protein localises to the cell membrane. The polypeptide is CASP-like protein 1E2 (Vitis vinifera (Grape)).